A 445-amino-acid chain; its full sequence is Phosphoglucosamine mutase (445 aa).

Catalysis depends on serine 102, which acts as the Phosphoserine intermediate. The Mg(2+) site is built by serine 102, aspartate 240, aspartate 242, and aspartate 244. Phosphoserine is present on serine 102.

This sequence belongs to the phosphohexose mutase family. The cofactor is Mg(2+). In terms of processing, activated by phosphorylation.

The catalysed reaction is alpha-D-glucosamine 1-phosphate = D-glucosamine 6-phosphate. Catalyzes the conversion of glucosamine-6-phosphate to glucosamine-1-phosphate. This is Phosphoglucosamine mutase from Mycolicibacterium gilvum (strain PYR-GCK) (Mycobacterium gilvum (strain PYR-GCK)).